The sequence spans 349 residues: tRNA pseudouridine synthase D (349 aa).

Phe-27 lines the substrate pocket. The Nucleophile role is filled by Asp-80. Asn-129 serves as a coordination point for substrate. The TRUD domain occupies 155 to 303; that stretch reads GVPNYFGAQR…VEAARRAMLL (149 aa). A substrate-binding site is contributed by Phe-329.

It belongs to the pseudouridine synthase TruD family.

It carries out the reaction uridine(13) in tRNA = pseudouridine(13) in tRNA. In terms of biological role, responsible for synthesis of pseudouridine from uracil-13 in transfer RNAs. The protein is tRNA pseudouridine synthase D of Escherichia fergusonii (strain ATCC 35469 / DSM 13698 / CCUG 18766 / IAM 14443 / JCM 21226 / LMG 7866 / NBRC 102419 / NCTC 12128 / CDC 0568-73).